Here is a 385-residue protein sequence, read N- to C-terminus: Transcription factor-like protein DPB (385 aa).

Disordered stretches follow at residues 1–53 (MTTT…EQTI) and 71–102 (DIQGDDAGSQGASGVKKKKRGQRAAGPDKTGR). Over residues 22–31 (PSTRSWGTAV) the composition is skewed to polar residues. Low complexity predominate over residues 32–53 (SGQSVSTSGSMGSPSSRSEQTI). Residues 101 to 184 (GRGLRQFSMK…KKEIQWRGLP (84 aa)) mediate DNA binding. A DEF box motif is present at residues 150–184 (DEKNIRRRVYDALNVLMAMDIISKDKKEIQWRGLP). Residues 185 to 234 (RTSLSDIEELKNERLSLRNRIEKKTAYSQELEEQYVGLQNLIQRNEHLYS) adopt a coiled-coil conformation. The tract at residues 296 to 385 (PPQQPNGRNN…IMNSSMKPEN (90 aa)) is disordered. Residues 300-327 (PNGRNNSQLVCHNFTPENPNKGPSTGPT) are compositionally biased toward polar residues. The segment covering 336–349 (HLQSQQHQQHSQLQ) has biased composition (low complexity). A compositionally biased stretch (polar residues) spans 355–364 (ETNNVTSSAD).

This sequence belongs to the E2F/DP family. Heterodimer with non-phosphorylated E2FC. No interaction with phosphorylated E2FC. Interacts preferentially with E2FC, but also with E2FA and E2FB. Interacts with SKP2A. Targeted for proteasomal degradation by the SCF(SKP2A) E3 ubiquitin ligase complex. Post-translationally, phosphorylated. In terms of tissue distribution, ubiquitous.

It localises to the nucleus. The protein localises to the cytoplasm. Involved in the regulation of the G1/S transition. Increases the DNA binding activity of E2F proteins after heterodimerization. The complex DPB/E2FC restricts cell division and lateral root initiation and may function as a negative regulator of E2F-regulated genes. The interaction with SKP2A is controlled by auxin. The polypeptide is Transcription factor-like protein DPB (DPB) (Arabidopsis thaliana (Mouse-ear cress)).